We begin with the raw amino-acid sequence, 381 residues long: Dynactin subunit 2 (381 aa).

The tract at residues 15–39 is disordered; sequence DQPDVYETPDAPESETSDFYDEEPA. Acidic residues predominate over residues 24 to 39; sequence DAPESETSDFYDEEPA. 2 coiled-coil regions span residues 100-216 and 350-381; these read QKCL…AVGA and GVQE…EKVK.

The protein belongs to the dynactin subunit 2 family. In terms of assembly, subunit of dynactin, a multiprotein complex associated with dynein.

Its subcellular location is the cytoplasm. It localises to the cytoskeleton. The protein localises to the membrane. Its function is as follows. Modulates cytoplasmic dynein binding to an organelle, and plays a role in prometaphase chromosome alignment and spindle organization during mitosis. This Aedes aegypti (Yellowfever mosquito) protein is Dynactin subunit 2.